A 635-amino-acid polypeptide reads, in one-letter code: MIQITLPDASKREYPQAVTVAEVAASIGAGLAKAALGGKVDGKVVDTSYLIEKDSALSIITAKDADGLELIRHSTAHLLAYAVKELFSEAQVTIGPVIENGFYYDFAYKRPFTPEDLAAIEKRMTELAAKDEPVTRRVLPRDEAVAHFKSIGEHYKAEIIASIPANEDVSLYREGTFEDLCRGPHVPSTGKLKFFKLMKVAGAYWRGDHRNEMLQRVYGTAWATKDELQQYLTMLEEAEKRDHRKLGKELDLFHIDDHAPGLVFWHPKGWTIWQGVEQYMRKVYQDNGYQEVKGPQVIDKTLWEKTGHWDKYRDNMFTTESEKREYALKPMNCPGHILIFKQGIKSYRDLPLRYGEFGQCHRNEPSGGLHGIMRVRGFTQDDGHIFCTEEQILKECVDYTTLLQKVYTDFGFKNIIYKVATRPDARIGSDESWDKAEQALIESLRASGCEFEISPGEGAFYGPKIEYTLKDAIGRQWQCGTMQVDFSMPERLDAEYVGEDGARHRPVMLHRAIVGSLERFIGILIEEHAGALPTWLAPIQVSVLNITDSQAEYAREVAKTLQNQGLRVNLDLRNEKITYKIREHSLQKLPYILVVGDKEKAAGAVAVRARGNKDLGVMSIEAFAQQIASDIAQKA.

The TGS domain maps to 1–61; sequence MIQITLPDAS…EKDSALSIIT (61 aa). The interval 242 to 533 is catalytic; it reads DHRKLGKELD…LIEEHAGALP (292 aa). Residues Cys333, His384, and His510 each contribute to the Zn(2+) site.

Belongs to the class-II aminoacyl-tRNA synthetase family. In terms of assembly, homodimer. Requires Zn(2+) as cofactor.

Its subcellular location is the cytoplasm. The enzyme catalyses tRNA(Thr) + L-threonine + ATP = L-threonyl-tRNA(Thr) + AMP + diphosphate + H(+). Catalyzes the attachment of threonine to tRNA(Thr) in a two-step reaction: L-threonine is first activated by ATP to form Thr-AMP and then transferred to the acceptor end of tRNA(Thr). Also edits incorrectly charged L-seryl-tRNA(Thr). This chain is Threonine--tRNA ligase, found in Polaromonas sp. (strain JS666 / ATCC BAA-500).